The chain runs to 194 residues: MILSDRDIKKYLEEGKLVIHPIDDPQKQIQPSSVDLRLGNSFLHFKVEGRAYIDPTQDSPQELMEIIEIEEGKPFFLRPGEFVLGTTIETVKLPDDLVARVDGRSSLGRLGIIVHATAGYVDPGFCGQITLELSNINRVPVALYPGMRICQISFYKLSSPAETPYYKKAGSKYHNQKGPTASRLNIDFCKKEEK.

DCTP is bound by residues 104–109 (RSSLGR), Asp-122, 130–132 (TLE), Gln-151, Tyr-165, Lys-172, and Gln-176. Glu-132 serves as the catalytic Proton donor/acceptor.

Belongs to the dCTP deaminase family. As to quaternary structure, homotrimer.

It carries out the reaction dCTP + 2 H2O = dUMP + NH4(+) + diphosphate. The protein operates within pyrimidine metabolism; dUMP biosynthesis; dUMP from dCTP: step 1/1. Bifunctional enzyme that catalyzes both the deamination of dCTP to dUTP and the hydrolysis of dUTP to dUMP without releasing the toxic dUTP intermediate. This chain is dCTP deaminase, dUMP-forming, found in Dictyoglomus thermophilum (strain ATCC 35947 / DSM 3960 / H-6-12).